A 1018-amino-acid polypeptide reads, in one-letter code: UPF0182 protein Tfu_0541 (1018 aa).

7 helical membrane-spanning segments follow: residues 20–40 (LAPVGAAVVVIIAGIMFAANF), 64–84 (ALLFAGGALLMALAVGLSVYF), 115–135 (VFFWGLVGGLALLTGASATAE), 171–191 (VIIGYLYTAVVIAFIAGVVVH), 212–232 (VHLSVLLGVFLLLRAADYWLE), 254–274 (AVLYAKIILFFIALVCAVLFF), and 287–307 (VSLGLMVLSAILIGGVYPAIV). 2 disordered regions span residues 497-570 (YPVD…QANN) and 939-965 (GDEAPLEEPTTDGEAREEEEQPQASSD). Composition is skewed to acidic residues over residues 542-560 (QDQEGQDGGEDAQGTEEEQ) and 939-959 (GDEAPLEEPTTDGEAREEEEQ).

The protein belongs to the UPF0182 family.

The protein resides in the cell membrane. The protein is UPF0182 protein Tfu_0541 of Thermobifida fusca (strain YX).